Here is a 510-residue protein sequence, read N- to C-terminus: Protein HGV2 (510 aa).

The segment at 95–227 is disordered; the sequence is GVPEEDADGD…KENESEEDPD (133 aa). Acidic residues predominate over residues 98–110; it reads EEDADGDSDQEQE. Composition is skewed to basic and acidic residues over residues 111 to 129 and 142 to 199; these read QFEK…REEV and EERG…DKPV. The segment covering 204-217 has biased composition (low complexity); that stretch reads TEEPGTSGTSASSS. 2 TPR repeats span residues 260–293 and 302–335; these read AQCH…QKDL and AETY…LEAR. A disordered region spans residues 391–510; that stretch reads DGSPFRQASE…TPKKDAAKRR (120 aa). The segment covering 398-411 has biased composition (low complexity); sequence ASEGESSSGLGAST. 2 consecutive short sequence motifs (nuclear localization signal) follow at residues 444–451 and 465–471; these read VRRKRPSP and SKKAKQE. Basic and acidic residues predominate over residues 459 to 471; the sequence is ESKENESKKAKQE.

It belongs to the NASP family. In terms of tissue distribution, embryo and larvae.

It localises to the nucleus. Functionally, may function as a nucleosome assembly factor during rapid embryonic cell divisions. The polypeptide is Protein HGV2 (HGV2) (Halocynthia roretzi (Sea squirt)).